A 209-amino-acid polypeptide reads, in one-letter code: C-type lectin domain family 6 member A (209 aa).

Over 1–20 (MVQERQSQGKGVCWTLRLWS) the chain is Cytoplasmic. The helical; Signal-anchor for type II membrane protein transmembrane segment at 21 to 43 (AAVISMLLLSTCFIASCVVTYQF) threads the bilayer. Residues 44 to 209 (IMDQPSRRLY…SICEMKKIYL (166 aa)) are Extracellular-facing. 4 cysteine pairs are disulfide-bonded: C64–C78, C79–C90, C107–C202, and C176–C194. The C-type lectin domain maps to 86–203 (FGSSCYLIST…CDSKHNSICE (118 aa)). V116, N118, and E122 together coordinate Ca(2+). N-linked (GlcNAc...) asparagine glycosylation occurs at N131. Ca(2+)-binding residues include E168, N170, and E174. Residues 168–170 (EPN), E174, W182, and 190–191 (ND) each bind alpha-D-mannopyranose. Ca(2+)-binding residues include N190, D191, and E203.

In terms of assembly, associated with FCER1G. Heterodimer with CLEC4D; this heterodimer forms a pattern recognition receptor (PRR) against fungal infection. In terms of tissue distribution, expressed by the XS52 DC (dendritic cell) line (at protein level). Expressed constitutively by the epidermis, and skin resident DC appear to be the major source of this expression. Expressed in the spleen and thymus. Expression was undetectable in non-DC lines, including macrophage lines (J774 and Raw), T-cell lines (7-17, HDK-1, and D10), B-cell hybridoma (5C5), a keratinocyte line (Pam 212), and a fibroblast line (NS01).

It is found in the cell membrane. Its function is as follows. Calcium-dependent lectin that acts as a pattern recognition receptor (PRR) of the innate immune system: specifically recognizes and binds alpha-mannans on C.albicans hypheas. Binding of C.albicans alpha-mannans to this receptor complex leads to phosphorylation of the immunoreceptor tyrosine-based activation motif (ITAM) of FCER1G, triggering activation of SYK, CARD9 and NF-kappa-B, consequently driving maturation of antigen-presenting cells and shaping antigen-specific priming of T-cells toward effector T-helper 1 and T-helper 17 cell subtypes. Also recognizes, in a mannose-dependent manner, allergens from house dust mite and fungi, by promoting cysteinyl leukotriene production. Recognizes soluble elements from the eggs of Shistosoma mansoni altering adaptive immune responses. The sequence is that of C-type lectin domain family 6 member A from Mus musculus (Mouse).